Reading from the N-terminus, the 138-residue chain is Thyrotropin subunit beta (138 aa).

The N-terminal stretch at 1-20 (MNAVVLFSVLFALACGQVSS) is a signal peptide. 6 cysteine pairs are disulfide-bonded: cysteine 22–cysteine 72, cysteine 36–cysteine 87, cysteine 39–cysteine 125, cysteine 47–cysteine 103, cysteine 51–cysteine 105, and cysteine 108–cysteine 115. The N-linked (GlcNAc...) asparagine glycan is linked to asparagine 43. Residues 133-138 (LGGFSG) constitute a propeptide that is removed on maturation.

The protein belongs to the glycoprotein hormones subunit beta family. As to quaternary structure, heterodimer of a common alpha chain and a unique beta chain which confers biological specificity to thyrotropin, lutropin, follitropin and gonadotropin.

Its subcellular location is the secreted. Indispensable for the control of thyroid structure and metabolism. This is Thyrotropin subunit beta (Tshb) from Rattus norvegicus (Rat).